A 436-amino-acid polypeptide reads, in one-letter code: Exodeoxyribonuclease 7 large subunit (436 aa).

Residues 412–436 (PGGVMNKNSNTTDSTDNTENGTGEA) are disordered. The segment covering 417 to 436 (NKNSNTTDSTDNTENGTGEA) has biased composition (low complexity).

This sequence belongs to the XseA family. In terms of assembly, heterooligomer composed of large and small subunits.

It is found in the cytoplasm. The catalysed reaction is Exonucleolytic cleavage in either 5'- to 3'- or 3'- to 5'-direction to yield nucleoside 5'-phosphates.. Bidirectionally degrades single-stranded DNA into large acid-insoluble oligonucleotides, which are then degraded further into small acid-soluble oligonucleotides. The protein is Exodeoxyribonuclease 7 large subunit of Corynebacterium jeikeium (strain K411).